The primary structure comprises 260 residues: Hydroxyacylglutathione hydrolase (260 aa).

7 residues coordinate Zn(2+): His66, His68, Asp70, His71, His125, Asp150, and His188.

Belongs to the metallo-beta-lactamase superfamily. Glyoxalase II family. Monomer. Zn(2+) serves as cofactor.

It catalyses the reaction an S-(2-hydroxyacyl)glutathione + H2O = a 2-hydroxy carboxylate + glutathione + H(+). It functions in the pathway secondary metabolite metabolism; methylglyoxal degradation; (R)-lactate from methylglyoxal: step 2/2. Functionally, thiolesterase that catalyzes the hydrolysis of S-D-lactoyl-glutathione to form glutathione and D-lactic acid. The protein is Hydroxyacylglutathione hydrolase of Prochlorococcus marinus (strain MIT 9303).